The sequence spans 459 residues: Anthocyanidin 3-O-glucoside 2''-O-glucosyltransferase (459 aa).

The active-site Proton acceptor is histidine 20. Histidine 20 contributes to the an anthocyanidin binding site. Aspartate 117 serves as the catalytic Charge relay. Positions 138, 335, 337, 352, 355, 357, and 360 each coordinate UDP-alpha-D-glucose. Glycine 375 lines the an anthocyanidin pocket. 2 residues coordinate UDP-alpha-D-glucose: aspartate 376 and glutamine 377.

This sequence belongs to the UDP-glycosyltransferase family.

The catalysed reaction is an anthocyanidin 3-O-beta-D-glucoside + UDP-alpha-D-glucose = an anthocyanidin 3-O-sophoroside + UDP + 2 H(+). It functions in the pathway pigment biosynthesis; anthocyanin biosynthesis. Glycosyltransferase that mediates the glucosylation of anthocyanidin 3-O-glucosides to yield anthocyanidin 3-O-sophorosides. 3-O-sophoroside derivatives are required for the color of flowers. This chain is Anthocyanidin 3-O-glucoside 2''-O-glucosyltransferase (3GGT), found in Ipomoea purpurea (Common morning glory).